The sequence spans 427 residues: Peptidase B (427 aa).

Mn(2+) contacts are provided by lysine 195 and aspartate 200. Residue lysine 207 is part of the active site. Residues aspartate 218, aspartate 277, and glutamate 279 each coordinate Mn(2+). Residue arginine 281 is part of the active site.

Belongs to the peptidase M17 family. As to quaternary structure, homohexamer. Mn(2+) serves as cofactor.

Its subcellular location is the cytoplasm. It catalyses the reaction Release of an N-terminal amino acid, Xaa, from a peptide or arylamide. Xaa is preferably Glu or Asp but may be other amino acids, including Leu, Met, His, Cys and Gln.. Functionally, probably plays an important role in intracellular peptide degradation. The chain is Peptidase B from Shigella dysenteriae serotype 1 (strain Sd197).